We begin with the raw amino-acid sequence, 254 residues long: Imidazole glycerol phosphate synthase subunit HisF (254 aa).

Active-site residues include aspartate 12 and aspartate 132.

This sequence belongs to the HisA/HisF family. Heterodimer of HisH and HisF.

It is found in the cytoplasm. The catalysed reaction is 5-[(5-phospho-1-deoxy-D-ribulos-1-ylimino)methylamino]-1-(5-phospho-beta-D-ribosyl)imidazole-4-carboxamide + L-glutamine = D-erythro-1-(imidazol-4-yl)glycerol 3-phosphate + 5-amino-1-(5-phospho-beta-D-ribosyl)imidazole-4-carboxamide + L-glutamate + H(+). The protein operates within amino-acid biosynthesis; L-histidine biosynthesis; L-histidine from 5-phospho-alpha-D-ribose 1-diphosphate: step 5/9. In terms of biological role, IGPS catalyzes the conversion of PRFAR and glutamine to IGP, AICAR and glutamate. The HisF subunit catalyzes the cyclization activity that produces IGP and AICAR from PRFAR using the ammonia provided by the HisH subunit. The polypeptide is Imidazole glycerol phosphate synthase subunit HisF (Symbiobacterium thermophilum (strain DSM 24528 / JCM 14929 / IAM 14863 / T)).